A 44-amino-acid chain; its full sequence is Photosystem I reaction center subunit IX (44 aa).

A helical membrane pass occupies residues 7-27; it reads YLSVAPVLSTLSLGFFAGFLI.

The protein belongs to the PsaJ family.

The protein resides in the plastid membrane. Its function is as follows. May help in the organization of the PsaE and PsaF subunits. This is Photosystem I reaction center subunit IX from Cuscuta obtusiflora (Peruvian dodder).